The sequence spans 490 residues: Probable glycine dehydrogenase (decarboxylating) subunit 2 (490 aa).

An N6-(pyridoxal phosphate)lysine modification is found at K273.

This sequence belongs to the GcvP family. C-terminal subunit subfamily. As to quaternary structure, the glycine cleavage system is composed of four proteins: P, T, L and H. In this organism, the P 'protein' is a heterodimer of two subunits. It depends on pyridoxal 5'-phosphate as a cofactor.

The catalysed reaction is N(6)-[(R)-lipoyl]-L-lysyl-[glycine-cleavage complex H protein] + glycine + H(+) = N(6)-[(R)-S(8)-aminomethyldihydrolipoyl]-L-lysyl-[glycine-cleavage complex H protein] + CO2. The glycine cleavage system catalyzes the degradation of glycine. The P protein binds the alpha-amino group of glycine through its pyridoxal phosphate cofactor; CO(2) is released and the remaining methylamine moiety is then transferred to the lipoamide cofactor of the H protein. This Staphylococcus aureus (strain MSSA476) protein is Probable glycine dehydrogenase (decarboxylating) subunit 2.